A 315-amino-acid polypeptide reads, in one-letter code: Type II restriction enzyme AvaI (315 aa).

It carries out the reaction Endonucleolytic cleavage of DNA to give specific double-stranded fragments with terminal 5'-phosphates.. In terms of biological role, a P subtype restriction enzyme that recognizes the double-stranded sequence 5'-CYCGRG-3' and cleaves after C-1. The polypeptide is Type II restriction enzyme AvaI (Anabaena variabilis).